We begin with the raw amino-acid sequence, 399 residues long: Elongation factor Tu (399 aa).

The region spanning 10–204 (KPHVNIGTIG…AVDANIPEPE (195 aa)) is the tr-type G domain. The interval 19 to 26 (GHVDHGKT) is G1. 19–26 (GHVDHGKT) contacts GTP. Mg(2+) is bound at residue T26. The G2 stretch occupies residues 60–64 (GITIN). The segment at 81–84 (DCPG) is G3. Residues 81 to 85 (DCPGH) and 136 to 139 (NKCD) contribute to the GTP site. The tract at residues 136-139 (NKCD) is G4. Residues 174–176 (SGL) are G5.

This sequence belongs to the TRAFAC class translation factor GTPase superfamily. Classic translation factor GTPase family. EF-Tu/EF-1A subfamily. In terms of assembly, monomer.

It is found in the cytoplasm. The catalysed reaction is GTP + H2O = GDP + phosphate + H(+). Its function is as follows. GTP hydrolase that promotes the GTP-dependent binding of aminoacyl-tRNA to the A-site of ribosomes during protein biosynthesis. This chain is Elongation factor Tu, found in Synechococcus sp. (strain WH7803).